A 652-amino-acid polypeptide reads, in one-letter code: DNA ligase (652 aa).

NAD(+)-binding positions include 29–33, 78–79, and E107; these read DSEYD and SL. K109 acts as the N6-AMP-lysine intermediate in catalysis. Residues R130, E164, K278, and K302 each coordinate NAD(+). Positions 395, 398, 413, and 418 each coordinate Zn(2+). The 76-residue stretch at 577–652 folds into the BRCT domain; the sequence is VADAALSGLT…VRDEAWLESL (76 aa).

This sequence belongs to the NAD-dependent DNA ligase family. LigA subfamily. Mg(2+) serves as cofactor. Requires Mn(2+) as cofactor.

It carries out the reaction NAD(+) + (deoxyribonucleotide)n-3'-hydroxyl + 5'-phospho-(deoxyribonucleotide)m = (deoxyribonucleotide)n+m + AMP + beta-nicotinamide D-nucleotide.. Its function is as follows. DNA ligase that catalyzes the formation of phosphodiester linkages between 5'-phosphoryl and 3'-hydroxyl groups in double-stranded DNA using NAD as a coenzyme and as the energy source for the reaction. It is essential for DNA replication and repair of damaged DNA. This is DNA ligase from Streptococcus pneumoniae (strain Hungary19A-6).